The chain runs to 472 residues: N-succinylglutamate 5-semialdehyde dehydrogenase 1 (472 aa).

209 to 214 lines the NAD(+) pocket; that stretch reads GGVQAG. Residues E232 and C266 contribute to the active site.

Belongs to the aldehyde dehydrogenase family. AstD subfamily.

The catalysed reaction is N-succinyl-L-glutamate 5-semialdehyde + NAD(+) + H2O = N-succinyl-L-glutamate + NADH + 2 H(+). It participates in amino-acid degradation; L-arginine degradation via AST pathway; L-glutamate and succinate from L-arginine: step 4/5. Functionally, catalyzes the NAD-dependent reduction of succinylglutamate semialdehyde into succinylglutamate. The sequence is that of N-succinylglutamate 5-semialdehyde dehydrogenase 1 from Caulobacter vibrioides (strain ATCC 19089 / CIP 103742 / CB 15) (Caulobacter crescentus).